Consider the following 339-residue polypeptide: MEEAHNMREISIREIVVNHAVLSSCIDKCGDCFASEAARIKFDNDIEAIFELKRKRNAVILAHNYQTPEIFHGVADIVGDSLALARKAIDVDADVIVLAGVHFMAETAKLLNPEKTVLIPDREAGCSLAESITPEDVALLRQAHPGIPIVTYVNTSAAVKAASDICCTSGNAKKVVEALGVPKVLMIPDEYLARNVAKETEVQIISWHGHCEVHELFSASDILQLRENHPGVTVLAHPECPPDVVAAADFAGSTAAMSDYVTTKQPKRVVLLTECSMSDNIAVHHPDVEFISSCNLCPHMKRITLANIRTALEENRHEVTVDAKIADPARRAVERMLAI.

Residues His63 and Ser81 each contribute to the iminosuccinate site. Cys126 is a [4Fe-4S] cluster binding site. Residues 152–154 (YVN) and Ser169 each bind iminosuccinate. A [4Fe-4S] cluster-binding site is contributed by Cys211. Residues 237–239 (HPE) and Thr254 each bind iminosuccinate. Position 297 (Cys297) interacts with [4Fe-4S] cluster.

It belongs to the quinolinate synthase family. Type 2 subfamily. [4Fe-4S] cluster serves as cofactor.

It is found in the cytoplasm. The enzyme catalyses iminosuccinate + dihydroxyacetone phosphate = quinolinate + phosphate + 2 H2O + H(+). It participates in cofactor biosynthesis; NAD(+) biosynthesis; quinolinate from iminoaspartate: step 1/1. Catalyzes the condensation of iminoaspartate with dihydroxyacetone phosphate to form quinolinate. This Xylella fastidiosa (strain Temecula1 / ATCC 700964) protein is Quinolinate synthase.